The chain runs to 612 residues: Beta-mannosyltransferase 5 (612 aa).

Residues 1-12 (MVQKQYRFAPKS) are Cytoplasmic-facing. The chain crosses the membrane as a helical span at residues 13–33 (IFTFVFLCFVAIVVIISTSSL). The Extracellular segment spans residues 34 to 612 (VQVEESLDPI…YRAHLKRWQN (579 aa)). Asn224, Asn230, and Asn480 each carry an N-linked (GlcNAc...) asparagine glycan.

This sequence belongs to the BMT family.

It localises to the membrane. Its function is as follows. Beta-mannosyltransferase involved in cell wall biosynthesis. Required for beta-1,2-mannose transfer on phospholipomannan. The sequence is that of Beta-mannosyltransferase 5 (BMT5) from Candida albicans (strain SC5314 / ATCC MYA-2876) (Yeast).